The primary structure comprises 250 residues: 2,3-bisphosphoglycerate-dependent phosphoglycerate mutase (250 aa).

Residues 8–15, 21–22, Arg-60, 87–90, Lys-98, 114–115, and 183–184 each bind substrate; these read RHGESEWN, TG, ERHY, RR, and GN. The Tele-phosphohistidine intermediate role is filled by His-9. Glu-87 serves as the catalytic Proton donor/acceptor.

The protein belongs to the phosphoglycerate mutase family. BPG-dependent PGAM subfamily.

It catalyses the reaction (2R)-2-phosphoglycerate = (2R)-3-phosphoglycerate. Its pathway is carbohydrate degradation; glycolysis; pyruvate from D-glyceraldehyde 3-phosphate: step 3/5. In terms of biological role, catalyzes the interconversion of 2-phosphoglycerate and 3-phosphoglycerate. The sequence is that of 2,3-bisphosphoglycerate-dependent phosphoglycerate mutase from Borrelia duttonii (strain Ly).